Here is a 218-residue protein sequence, read N- to C-terminus: Large ribosomal subunit protein bL25 (218 aa).

A disordered region spans residues 187–218 (SATAAVEEAKEDGAPEESAQGQGAAEAQETNK). The span at 202–218 (EESAQGQGAAEAQETNK) shows a compositional bias: low complexity.

It belongs to the bacterial ribosomal protein bL25 family. CTC subfamily. As to quaternary structure, part of the 50S ribosomal subunit; part of the 5S rRNA/L5/L18/L25 subcomplex. Contacts the 5S rRNA. Binds to the 5S rRNA independently of L5 and L18.

This is one of the proteins that binds to the 5S RNA in the ribosome where it forms part of the central protuberance. The polypeptide is Large ribosomal subunit protein bL25 (Anaplasma marginale (strain St. Maries)).